A 251-amino-acid chain; its full sequence is 3-deoxy-manno-octulosonate cytidylyltransferase (251 aa).

The protein belongs to the KdsB family.

The protein localises to the cytoplasm. It carries out the reaction 3-deoxy-alpha-D-manno-oct-2-ulosonate + CTP = CMP-3-deoxy-beta-D-manno-octulosonate + diphosphate. It functions in the pathway nucleotide-sugar biosynthesis; CMP-3-deoxy-D-manno-octulosonate biosynthesis; CMP-3-deoxy-D-manno-octulosonate from 3-deoxy-D-manno-octulosonate and CTP: step 1/1. It participates in bacterial outer membrane biogenesis; lipopolysaccharide biosynthesis. Functionally, activates KDO (a required 8-carbon sugar) for incorporation into bacterial lipopolysaccharide in Gram-negative bacteria. This chain is 3-deoxy-manno-octulosonate cytidylyltransferase, found in Rhizobium etli (strain CIAT 652).